We begin with the raw amino-acid sequence, 510 residues long: 2,3-bisphosphoglycerate-independent phosphoglycerate mutase (510 aa).

Mn(2+)-binding residues include Asp12 and Ser62. The Phosphoserine intermediate role is filled by Ser62. Residues His123, 153–154 (RD), Arg185, Arg191, 260–263 (RPDR), and Lys335 each bind substrate. The Mn(2+) site is built by Asp402, His406, Asp443, His444, and His461.

The protein belongs to the BPG-independent phosphoglycerate mutase family. In terms of assembly, monomer. Mn(2+) serves as cofactor.

It carries out the reaction (2R)-2-phosphoglycerate = (2R)-3-phosphoglycerate. It participates in carbohydrate degradation; glycolysis; pyruvate from D-glyceraldehyde 3-phosphate: step 3/5. In terms of biological role, catalyzes the interconversion of 2-phosphoglycerate and 3-phosphoglycerate. The sequence is that of 2,3-bisphosphoglycerate-independent phosphoglycerate mutase from Listeria innocua serovar 6a (strain ATCC BAA-680 / CLIP 11262).